A 424-amino-acid polypeptide reads, in one-letter code: CinA-like protein (424 aa).

This sequence belongs to the CinA family.

In Shewanella baltica (strain OS195), this protein is CinA-like protein.